A 227-amino-acid polypeptide reads, in one-letter code: Orotidine 5'-phosphate decarboxylase (227 aa).

Substrate-binding positions include Asp8, Lys30, 59–68 (DLKLYDIPYT), Thr118, Arg178, Gln187, Gly207, and Arg208. Lys61 (proton donor) is an active-site residue.

It belongs to the OMP decarboxylase family. Type 1 subfamily. As to quaternary structure, homodimer.

It catalyses the reaction orotidine 5'-phosphate + H(+) = UMP + CO2. It participates in pyrimidine metabolism; UMP biosynthesis via de novo pathway; UMP from orotate: step 2/2. Its function is as follows. Catalyzes the decarboxylation of orotidine 5'-monophosphate (OMP) to uridine 5'-monophosphate (UMP). This is Orotidine 5'-phosphate decarboxylase from Helicobacter pylori (strain Shi470).